Here is a 398-residue protein sequence, read N- to C-terminus: Enoyl-[acyl-carrier-protein] reductase [NADH] (398 aa).

NAD(+) is bound by residues 48–53, 74–75, 111–112, and 139–140; these read GASTGY, FE, DG, and LA. Y225 provides a ligand contact to substrate. Catalysis depends on Y235, which acts as the Proton donor. NAD(+)-binding positions include K244 and 273–275; that span reads VVT.

It belongs to the TER reductase family. In terms of assembly, monomer.

It carries out the reaction a 2,3-saturated acyl-[ACP] + NAD(+) = a (2E)-enoyl-[ACP] + NADH + H(+). It participates in lipid metabolism; fatty acid biosynthesis. In terms of biological role, involved in the final reduction of the elongation cycle of fatty acid synthesis (FAS II). Catalyzes the reduction of a carbon-carbon double bond in an enoyl moiety that is covalently linked to an acyl carrier protein (ACP). This chain is Enoyl-[acyl-carrier-protein] reductase [NADH], found in Variovorax paradoxus (strain S110).